The chain runs to 68 residues: DNA-directed RNA polymerase subunit omega (68 aa).

The protein belongs to the RNA polymerase subunit omega family. In terms of assembly, the RNAP catalytic core consists of 2 alpha, 1 beta, 1 beta' and 1 omega subunit. When a sigma factor is associated with the core the holoenzyme is formed, which can initiate transcription.

The catalysed reaction is RNA(n) + a ribonucleoside 5'-triphosphate = RNA(n+1) + diphosphate. Functionally, promotes RNA polymerase assembly. Latches the N- and C-terminal regions of the beta' subunit thereby facilitating its interaction with the beta and alpha subunits. The protein is DNA-directed RNA polymerase subunit omega of Geobacter sp. (strain M21).